The primary structure comprises 1162 residues: Integrin alpha-L (1162 aa).

The signal sequence occupies residues Met1–Ser23. The Extracellular portion of the chain corresponds to Tyr24–His1088. FG-GAP repeat units follow at residues Thr28 to Pro79 and Val80 to Leu138. Residues Cys70 and Cys77 are joined by a disulfide bond. The N-linked (GlcNAc...) asparagine glycan is linked to Asn86. 2 disulfide bridges follow: Cys108–Cys126 and Cys147–Cys199. The 173-residue stretch at Asp153–Leu325 folds into the VWFA domain. N-linked (GlcNAc...) asparagine glycosylation is found at Asn185 and Asn270. 5 FG-GAP repeats span residues Asn336–Phe387, Gln390–Trp443, Asn444–Met504, Val505–Pro561, and Gln565–Glu625. An N-linked (GlcNAc...) asparagine glycan is attached at Asn444. Ca(2+) is bound by residues Asp466, Asp468, Asp470, Glu474, Asp528, Asn530, Asp532, Asp536, Asp588, Asp592, and Asp596. Cys651 and Cys705 are disulfide-bonded. N-linked (GlcNAc...) asparagine glycosylation is found at Asn668, Asn696, Asn724, and Asn728. Cys768 and Cys774 are oxidised to a cystine. N-linked (GlcNAc...) asparagine glycosylation is present at Asn777. Cys841 and Cys857 are disulfide-bonded. Asn858, Asn881, Asn891, Asn900, and Asn928 each carry an N-linked (GlcNAc...) asparagine glycan. 2 disulfides stabilise this stretch: Cys994-Cys1010 and Cys1018-Cys1049. A glycan (N-linked (GlcNAc...) asparagine) is linked at Asn1057. The chain crosses the membrane as a helical span at residues Val1089–Tyr1109. At Lys1110–Asp1162 the chain is on the cytoplasmic side. Residues Gly1112–Arg1116 carry the GFFKR motif motif. A disordered region spans residues Ala1124–Asp1162. Residues Glu1145–Asp1162 are compositionally biased toward basic and acidic residues.

Belongs to the integrin alpha chain family. In terms of assembly, heterodimer of an alpha and a beta subunit. The ITGAL alpha subunit associates with the ITGB2 beta subunit. Interacts with THBD. Interacts with CD226. In resting T-cells, up to 40% of surface ITGAL is constitutively phosphorylated. Phosphorylation causes conformational changes needed for ligand binding and is necessary for the activation by some physiological agents. As to expression, leukocytes.

Its subcellular location is the cell membrane. In terms of biological role, integrin ITGAL/ITGB2 is a receptor for ICAM1, ICAM2, ICAM3 and ICAM4. Integrin ITGAL/ITGB2 is a receptor for F11R. Integrin ITGAL/ITGB2 is a receptor for the secreted form of ubiquitin-like protein ISG15; the interaction is mediated by ITGAL. Involved in a variety of immune phenomena including leukocyte-endothelial cell interaction, cytotoxic T-cell mediated killing, and antibody dependent killing by granulocytes and monocytes. Contributes to natural killer cell cytotoxicity. Involved in leukocyte adhesion and transmigration of leukocytes including T-cells and neutrophils. Acts as a platform at the immunological synapse to translate TCR engagement and density of the ITGAL ligand ICAM1 into graded adhesion. Required for generation of common lymphoid progenitor cells in bone marrow, indicating the role in lymphopoiesis. Integrin ITGAL/ITGB2 in association with ICAM3, contributes to apoptotic neutrophil phagocytosis by macrophages. This chain is Integrin alpha-L, found in Mus musculus (Mouse).